Consider the following 237-residue polypeptide: Indole-3-glycerol phosphate synthase (237 aa).

The protein belongs to the TrpC family.

The enzyme catalyses 1-(2-carboxyphenylamino)-1-deoxy-D-ribulose 5-phosphate + H(+) = (1S,2R)-1-C-(indol-3-yl)glycerol 3-phosphate + CO2 + H2O. It functions in the pathway amino-acid biosynthesis; L-tryptophan biosynthesis; L-tryptophan from chorismate: step 4/5. This Thermoplasma volcanium (strain ATCC 51530 / DSM 4299 / JCM 9571 / NBRC 15438 / GSS1) protein is Indole-3-glycerol phosphate synthase.